We begin with the raw amino-acid sequence, 360 residues long: 45 kDa calcium-binding protein (360 aa).

An N-terminal signal peptide occupies residues 1–29 (MVSKQAFLFSLGSLYLSLLFIFLLMDVYA). Asn-33 is a glycosylation site (N-linked (GlcNAc...) asparagine). 5 consecutive EF-hand domains span residues 96–131 (RNRR…KTEE), 135–170 (EAVN…SKGF), 231–266 (MLKF…TVEN), 276–311 (WVRD…MNEY), and 312–347 (NALN…FTGS). Residues Asp-109, Asn-111, Asp-113, Gln-115, Glu-120, Asp-148, Asp-150, Asp-152, His-154, Glu-159, Asp-244, Asp-246, Asp-248, Lys-250, Glu-255, Asp-289, Asn-291, Asp-293, Glu-300, Asp-325, Asn-327, Asp-329, and Glu-336 each contribute to the Ca(2+) site.

The protein belongs to the CREC family.

The protein resides in the golgi apparatus lumen. In terms of biological role, may regulate calcium-dependent activities in the endoplasmic reticulum lumen or post-ER compartment. This Xenopus laevis (African clawed frog) protein is 45 kDa calcium-binding protein (sdf4).